A 460-amino-acid polypeptide reads, in one-letter code: MDMEVLGQEQSSEQLDLEEISRKISFLDKWREIFSYHRLGTNNSTPQNHEGNHTSADENEDGTGLSQPKGQGHLPSSGLCSIPNPSIISSKLGGFPISLAMATKLRQILFGNTVHVFSYNWKKAYFRFHDPSSELAFTLEVGKGGARSIQMAVQGSIIKYLLFTRKGKDCNLGNLCEISKKEQEQALAAALAGILWAAGAAQKATICLVTEDIYVASTPDYSVDNFTERLQLFEFLEKEAAEKFIYDHLLCFRGEGSHGVILFLYSLIFSRTFERLQMDLDVTTTQLLQPNAGGFLCRQAVLNMILTGRASPNVFNGCEEGKSQETLHGVLTRSDVGYLQWGKDASEDDRLSQVGSMLKTPKLPIWLCNINGNYSILFCTNRQLLSDWKMERLFDLYFYSGQPSQKKLVRLTIDTHSHHWERDQQEEKHGPRRRFSPVEMAIRTKWSEATINWNGTVPFF.

A disordered region spans residues 41–76 (TNNSTPQNHEGNHTSADENEDGTGLSQPKGQGHLPS).

The protein belongs to the MINDY deubiquitinase family. FAM188 subfamily.

This Homo sapiens (Human) protein is Inactive ubiquitin carboxyl-terminal hydrolase MINDY-4B.